Consider the following 143-residue polypeptide: Small ribosomal subunit protein uS12 (143 aa).

Residues 1–19 (MGKPRGLRTARKHVNHRRD) show a composition bias toward basic residues. A disordered region spans residues 1–23 (MGKPRGLRTARKHVNHRRDQRWA). P62 is subject to 3-hydroxyproline.

It belongs to the universal ribosomal protein uS12 family. Component of the 40S small ribosomal subunit. In terms of processing, hydroxylation at Pro-62 affects translation termination efficiency.

The protein resides in the cytoplasm. The protein localises to the cytosol. It is found in the rough endoplasmic reticulum. This Drosophila melanogaster (Fruit fly) protein is Small ribosomal subunit protein uS12 (RpS23).